A 746-amino-acid polypeptide reads, in one-letter code: MMWESESDGGVGVGGGGGREYGDGVLSSNKHGGVKTDGFELRGQSWFVATDIPSDLLVKIGDMNFHLHKYPLLSRSGKMNRLIYESRDPDPTILILDDLPGGPEAFELASKFCYGVPVDLTATNISGLRCAAEYLEMTEDLEEGNLIFKTEAFLSYVVLSSWRDSILVLKSCEKLSPWAENLQIVRRCSESIAWKACSNPKGIRWAYTGKAPSPSTTNFAGSSPRWNESKDSSFYCSPSRNTNSQPVPPDWWFEDVSILRIDHFVRVITAIKVKGMRFELLGAVIMHYAGKWLPGLIKEGGVAIAPAMSSAIGGGLGLGGDEMSISCGSNSSGGSSGPDWKGGLHMVLSAGKTNGHQDSVACLAGLGISPKDQRMIVESLISIIPPQKDSVTCSFLLRLLRAANMLKVAPALITELEKRVGMQFEQATLQDLLIPGYNNKGETMYDVDLVQRLLEHFLVQEQTEGSSPSRMSPSPSQSMYADIPRGNNNNGGGGGGNNQNAKMRVARLVDSYLTEVARDRNLPLTKFQVLAEALPESARTCDDGLYRAIDSYLKAHPTLSEHERKRLCRVMDCQKLSMDACMHAAQNERLPLRVVVQVLFSEQVKISNALANTSLKESTTLGEAMGTYQPMIPNRKTLIEATPQSFQEGWAAAKKDINTLKFELETVKTKYVELQNEMEVMQRQFEKTGKVKNTPSSSAWTSGWKKLSKLTKMSGQESHDISSGGEQAGVDHPPPRKPRRWRNSIS.

Residues Met-1–Gly-24 are disordered. The span at Gly-9 to Arg-19 shows a compositional bias: gly residues. Residues Ser-54–Ala-122 enclose the BTB domain. One can recognise an NPH3 domain in the interval Asp-250–Lys-605. The segment at Glu-461–Asn-500 is disordered. Low complexity predominate over residues Ser-466–Ser-478. Tyr-546 is subject to Phosphotyrosine. Residues Ser-708–Ser-746 are disordered. Basic residues predominate over residues Pro-735–Ser-746.

It belongs to the NPH3 family. Interacts with PKS1, PKS2, RPT2, PHOT1 and PHOT2. Subunit of a complex made of CAR6, PHOT1 and RPT3/NPH3. Post-translationally, phosphorylated in the dark. Expressed in hypocotyls, guard cells and mesophyll cells.

It is found in the cell membrane. It functions in the pathway protein modification; protein ubiquitination. Functionally, may act as a substrate-specific adapter of an E3 ubiquitin-protein ligase complex (CUL3-RBX1-BTB) which mediates the ubiquitination and subsequent proteasomal degradation of target proteins. Signal transducer of the phototropic response and photo-induced movements. Involved in the phot1 pathway under low blue light (LBL) fluence rate and in the phot2 pathway under higher fluence rate of blue light (HBL). Necessary for root and hypocotyl phototropisms, but not for the regulation of stomata opening. Not involved in chloroplast accumulation and translocation. The protein is Root phototropism protein 3 (RPT3) of Arabidopsis thaliana (Mouse-ear cress).